A 173-amino-acid polypeptide reads, in one-letter code: Alpha-crystallin A chain (173 aa).

Met-1 carries the post-translational modification N-acetylmethionine. The required for complex formation with BFSP1 and BFSP2 stretch occupies residues 1 to 63 (MDVTIQHPWF…RTVLDSGISE (63 aa)). Gln-6 is subject to Deamidated glutamine; partial. Phosphoserine is present on Ser-45. Deamidated glutamine; partial occurs at positions 50 and 90. Residues 52–162 (LFRTVLDSGI…SHSERAIPVS (111 aa)) form the sHSP domain. Lys-99 is modified (N6-acetyllysine). His-100 provides a ligand contact to Zn(2+). At Asn-101 the chain carries Deamidated asparagine; partial. Residues Glu-102 and His-107 each coordinate Zn(2+). At Ser-122 the chain carries Phosphoserine. At Asn-123 the chain carries Deamidated asparagine; partial. Cysteines 131 and 142 form a disulfide. Gln-147 bears the Deamidated glutamine; partial mark. The disordered stretch occupies residues 149–173 (GMDASHSERAIPVSREEKPSSAPSS). Positions 153-167 (SHSERAIPVSREEKP) are enriched in basic and acidic residues. His-154 contributes to the Zn(2+) binding site. Residue Ser-162 is glycosylated (O-linked (GlcNAc) serine).

This sequence belongs to the small heat shock protein (HSP20) family. Heteromer composed of three CRYAA and one CRYAB subunits. Inter-subunit bridging via zinc ions enhances stability, which is crucial as there is no protein turn over in the lens. Can also form homodimers and homotetramers (dimers of dimers) which serve as the building blocks of homooligomers. Within homooligomers, the zinc-binding motif is created from residues of 3 different molecules. His-100 and Glu-102 from one molecule are ligands of the zinc ion, and His-107 and His-154 residues from additional molecules complete the site with tetrahedral coordination geometry. Part of a complex required for lens intermediate filament formation composed of BFSP1, BFSP2 and CRYAA. Undergoes age-dependent proteolytical cleavage at the C-terminus.

Its subcellular location is the cytoplasm. The protein localises to the nucleus. In terms of biological role, contributes to the transparency and refractive index of the lens. In its oxidized form (absence of intramolecular disulfide bond), acts as a chaperone, preventing aggregation of various proteins under a wide range of stress conditions. Required for the correct formation of lens intermediate filaments as part of a complex composed of BFSP1, BFSP2 and CRYAA. The protein is Alpha-crystallin A chain (CRYAA) of Loxodonta africana (African elephant).